Reading from the N-terminus, the 300-residue chain is Small ribosomal subunit protein uS2 (300 aa).

Residues R228–A300 form a disordered region. Positions A258–A300 are enriched in low complexity.

This sequence belongs to the universal ribosomal protein uS2 family.

The protein is Small ribosomal subunit protein uS2 of Rhodococcus jostii (strain RHA1).